The sequence spans 562 residues: Matrix metalloproteinase-25 (562 aa).

The first 21 residues, 1 to 21, serve as a signal peptide directing secretion; the sequence is MRLRLRLLALLLLLLAPPARA. Positions 22 to 107 are excised as a propeptide; the sequence is PKPSAQDVSL…VAGLVRRRRR (86 aa). Positions 88 to 95 match the Cysteine switch motif; it reads PRCSLPDV. The Zn(2+) site is built by Cys-90 and His-233. The active site involves Glu-234. The Zn(2+) site is built by His-237 and His-243. The tract at residues 278 to 313 is disordered; sequence LYGKAPQTPYDKPTRKPLAPPPQPPASPTHSPSFPI. The span at 295 to 304 shows a compositional bias: pro residues; the sequence is LAPPPQPPAS. Hemopexin repeat units follow at residues 314 to 363, 367 to 412, 413 to 461, and 462 to 508; these read PDRC…WEGL, VRVV…GLPP, GEEV…EGAP, and PSPD…WLDC. Cys-317 and Cys-508 are joined by a disulfide. The interval 490–526 is disordered; sequence SIKTEPDAPQPMGPNWLDCPAPSSGPRAPRPPKATPV. Ala-539 carries the GPI-anchor amidated alanine lipid modification. The propeptide at 540 to 562 is removed in mature form; sequence AGRWPAPIPLLLLPLLVGGVASR.

This sequence belongs to the peptidase M10A family. Zn(2+) is required as a cofactor. Requires Ca(2+) as cofactor. Post-translationally, the precursor is cleaved by a furin endopeptidase. In terms of tissue distribution, expressed predominantly in leukocytes, lung and spleen. Expressed also in colon carcinoma, astrocytoma and glioblastomas.

The protein resides in the cell membrane. The protein localises to the secreted. Its subcellular location is the extracellular space. It localises to the extracellular matrix. In terms of biological role, may activate progelatinase A. The polypeptide is Matrix metalloproteinase-25 (MMP25) (Homo sapiens (Human)).